Reading from the N-terminus, the 619-residue chain is 1-deoxy-D-xylulose-5-phosphate synthase (619 aa).

Thiamine diphosphate is bound by residues H74 and G115–S117. A Mg(2+)-binding site is contributed by D146. Thiamine diphosphate-binding positions include G147–A148, N175, Y285, and E365. Residue N175 participates in Mg(2+) binding.

Belongs to the transketolase family. DXPS subfamily. Homodimer. Requires Mg(2+) as cofactor. Thiamine diphosphate is required as a cofactor.

It catalyses the reaction D-glyceraldehyde 3-phosphate + pyruvate + H(+) = 1-deoxy-D-xylulose 5-phosphate + CO2. It participates in metabolic intermediate biosynthesis; 1-deoxy-D-xylulose 5-phosphate biosynthesis; 1-deoxy-D-xylulose 5-phosphate from D-glyceraldehyde 3-phosphate and pyruvate: step 1/1. Functionally, catalyzes the acyloin condensation reaction between C atoms 2 and 3 of pyruvate and glyceraldehyde 3-phosphate to yield 1-deoxy-D-xylulose-5-phosphate (DXP). The sequence is that of 1-deoxy-D-xylulose-5-phosphate synthase from Clostridium perfringens (strain SM101 / Type A).